Consider the following 287-residue polypeptide: Putative sugar uptake protein EF_0928 (287 aa).

Transmembrane regions (helical) follow at residues 5–27 (IALV…GGSA), 32–49 (LGMT…FFVI), 53–71 (LTTA…WSLG), 84–106 (VSVG…GAVF), 116–134 (FVVG…YLTA), 155–177 (IRAL…ATGL), 182–200 (IILP…FAFK), 207–229 (FVWM…LLTM), 234–256 (LAIS…IFLL), and 265–284 (MFYV…LLGY).

The protein belongs to the GRP transporter (TC 2.A.7.5) family.

The protein localises to the cell membrane. The protein is Putative sugar uptake protein EF_0928 of Enterococcus faecalis (strain ATCC 700802 / V583).